A 39-amino-acid chain; its full sequence is Large ribosomal subunit protein bL36 (39 aa).

It belongs to the bacterial ribosomal protein bL36 family.

This Leuconostoc mesenteroides subsp. mesenteroides (strain ATCC 8293 / DSM 20343 / BCRC 11652 / CCM 1803 / JCM 6124 / NCDO 523 / NBRC 100496 / NCIMB 8023 / NCTC 12954 / NRRL B-1118 / 37Y) protein is Large ribosomal subunit protein bL36.